Reading from the N-terminus, the 478-residue chain is MTRFLFAIILGFLLTACQQVTVEETEYVPHKLTELRVGTLYGPQIYMTSGQGNSGFDYDMAVLFAEYLDVPLKMVPYTNRAELYEALKKNEIDIIAAGMTETPARREQFRLGPPLYRVNQVLVYREGMPTPKDITDLKGKITVIADSSFVETLTQLQKRHPTLVWDQVTDKDSEELLAMIANKEIDYTIADSSSVQINRRYLPDLRSGLVLEEKLDVVWLLPPTHSDGLMSQLLAFWHQEKLAGTLDHLNEKYFGHVKRFDYIDTRAFLRAIETVLPRYRQLFETHAGDLDWRKLAATSYQESHWNPNARSPTGVRGMMMLTQPTAKEIGITNRLDAEESIRGGAAYLRDMINRLPESIPESQRMWFALASYNIGYAHVEDARKLAESMELNPNAWRDLKKVLPLLQKRKYYQKTRYGYARGSEAVHYVDSIRRYYDTLVWVDNQSKQQNSDEEEPSDLASEDGPAPVPGTLSPDKPK.

An N-terminal signal peptide occupies residues 1 to 22 (MTRFLFAIILGFLLTACQQVTV). Residues 23 to 257 (EETEYVPHKL…HLNEKYFGHV (235 aa)) form a non-LT domain region. The segment at 258–478 (KRFDYIDTRA…PGTLSPDKPK (221 aa)) is LT domain. Glu-302 is an active-site residue. The tract at residues 446–478 (SKQQNSDEEEPSDLASEDGPAPVPGTLSPDKPK) is disordered. Residues 451–461 (SDEEEPSDLAS) are compositionally biased toward acidic residues.

This sequence in the N-terminal section; belongs to the bacterial solute-binding protein 3 family. It in the C-terminal section; belongs to the transglycosylase Slt family.

Its subcellular location is the cell outer membrane. It carries out the reaction Exolytic cleavage of the (1-&gt;4)-beta-glycosidic linkage between N-acetylmuramic acid (MurNAc) and N-acetylglucosamine (GlcNAc) residues in peptidoglycan, from either the reducing or the non-reducing ends of the peptidoglycan chains, with concomitant formation of a 1,6-anhydrobond in the MurNAc residue.. Functionally, murein-degrading enzyme that degrades murein glycan strands and insoluble, high-molecular weight murein sacculi, with the concomitant formation of a 1,6-anhydromuramoyl product. Lytic transglycosylases (LTs) play an integral role in the metabolism of the peptidoglycan (PG) sacculus. Their lytic action creates space within the PG sacculus to allow for its expansion as well as for the insertion of various structures such as secretion systems and flagella. This is Membrane-bound lytic murein transglycosylase F from Shewanella sp. (strain MR-4).